The chain runs to 716 residues: 1,4-alpha-glucan branching enzyme GlgB (716 aa).

Asp394 (nucleophile) is an active-site residue. Glu447 serves as the catalytic Proton donor.

The protein belongs to the glycosyl hydrolase 13 family. GlgB subfamily. Monomer.

The catalysed reaction is Transfers a segment of a (1-&gt;4)-alpha-D-glucan chain to a primary hydroxy group in a similar glucan chain.. Its pathway is glycan biosynthesis; glycogen biosynthesis. Its function is as follows. Catalyzes the formation of the alpha-1,6-glucosidic linkages in glycogen by scission of a 1,4-alpha-linked oligosaccharide from growing alpha-1,4-glucan chains and the subsequent attachment of the oligosaccharide to the alpha-1,6 position. The protein is 1,4-alpha-glucan branching enzyme GlgB of Photobacterium profundum (strain SS9).